The sequence spans 333 residues: Probable siderophore transport system permease protein YfiZ (333 aa).

A signal peptide spans Met-1–Gly-31. A run of 8 helical transmembrane segments spans residues Ala-64–Leu-84, Ile-94–Ile-114, Ala-119–Gly-139, Thr-152–Val-172, Leu-193–Leu-213, Val-246–Ile-266, Trp-280–Ala-300, and Ile-303–Phe-323.

It belongs to the binding-protein-dependent transport system permease family. FecCD subfamily. As to quaternary structure, the complex is composed of one ATP-binding protein (YusV), two transmembrane proteins (YfiZ and YfhA) and a solute-binding protein (YfiY).

It is found in the cell membrane. Functionally, part of the ABC transporter complex YfiYZ/YfhA/YusV involved in import of the iron-hydroxamate siderophores schizokinen, arthrobactin and corprogen. This Bacillus subtilis (strain 168) protein is Probable siderophore transport system permease protein YfiZ (yfiZ).